The following is a 1457-amino-acid chain: Eye-specific diacylglycerol kinase (1457 aa).

Disordered stretches follow at residues 1-123, 136-177, and 207-339; these read MQQQ…SSEA, RSHS…PPCI, and YSNT…QPTT. Composition is skewed to low complexity over residues 22–62, 98–115, and 141–154; these read SATT…LRTT, SQRA…SSAS, and DSAT…DSGT. Acidic residues predominate over residues 214 to 253; sequence ASEDEDEVEGHNAEEEEEGSAAIEDAEEETTEAATEEADE. Positions 254 to 266 are enriched in basic and acidic residues; sequence DPRTEVESEHDHD. The segment covering 294–303 has biased composition (basic residues); the sequence is RLPRQMRRHT. 2 consecutive Phorbol-ester/DAG-type zinc fingers follow at residues 591–641 and 661–724; these read HYWK…TLAC and HHWV…GEEC. The segment at 758-799 is disordered; that stretch reads NNAASGSGGGGAGGGAGGGGGKSKKQTQRRQKGKEEKKEPRA. Positions 763–778 are enriched in gly residues; the sequence is GSGGGGAGGGAGGGGG. The span at 779-789 shows a compositional bias: basic residues; it reads KSKKQTQRRQK. The DAGKc domain maps to 808 to 944; it reads PEVIPVIVFI…MDRWRVKVTP (137 aa). The disordered stretch occupies residues 1264–1302; the sequence is TPDQERSFAAFSQRQAQNERRQMDQAQGRGPGSTDEDLQ. ANK repeat units lie at residues 1320–1349, 1353–1382, 1389–1418, and 1422–1451; these read QTSD…SLQS, NGQT…RRLI, LGQT…HLDT, and GGNT…TQPV.

Belongs to the eukaryotic diacylglycerol kinase family. As to expression, expressed specifically in adult eye.

The protein resides in the membrane. The enzyme catalyses a 1,2-diacyl-sn-glycerol + ATP = a 1,2-diacyl-sn-glycero-3-phosphate + ADP + H(+). Required for the maintenance of phospholipid turnover within the photoreceptor. The protein is Eye-specific diacylglycerol kinase (rdgA) of Drosophila melanogaster (Fruit fly).